The chain runs to 370 residues: Protein STRICTOSIDINE SYNTHASE-LIKE 9 (370 aa).

An N-terminal signal peptide occupies residues 1 to 26 (MPINQKIPTWFAVPAVFAVLSVISYQ). Asn-97 and Asn-171 each carry an N-linked (GlcNAc...) asparagine glycan.

It belongs to the strictosidine synthase family.

Its subcellular location is the vacuole. In Arabidopsis thaliana (Mouse-ear cress), this protein is Protein STRICTOSIDINE SYNTHASE-LIKE 9.